The chain runs to 146 residues: Acetyl-CoA decarbonylase/synthase complex subunit epsilon (146 aa).

This sequence belongs to the CdhB family. Heterotetramer of two alpha and two epsilon subunits. The ACDS complex is made up of alpha, epsilon, beta, gamma and delta subunits with a probable stoichiometry of (alpha(2)epsilon(2))(4)-beta(8)-(gamma(1)delta(1))(8).

Functionally, part of a complex that catalyzes the reversible cleavage of acetyl-CoA, allowing autotrophic growth from CO(2). The alpha-epsilon subcomponent functions as a carbon monoxide dehydrogenase. The precise role of the epsilon subunit is unclear; it may have a stabilizing role within the alpha(2)epsilon(2) component and/or be involved in electron transfer to FAD during a potential FAD-mediated CO oxidation. This is Acetyl-CoA decarbonylase/synthase complex subunit epsilon from Methanocaldococcus jannaschii (strain ATCC 43067 / DSM 2661 / JAL-1 / JCM 10045 / NBRC 100440) (Methanococcus jannaschii).